Reading from the N-terminus, the 447-residue chain is Polyamine export protein (447 aa).

The Cytoplasmic segment spans residues 1-4 (MLNS). The CNNM transmembrane domain occupies 1–197 (MLNSILVILC…ALAGVLRKQE (197 aa)). The chain crosses the membrane as a helical span at residues 5–25 (ILVILCLIAVSAFFSMSEISL). Topologically, residues 26 to 54 (AASRKIKLKLLADEGNINAQRVLNMQENP) are periplasmic. A helical transmembrane segment spans residues 55 to 75 (GMFFTVVQIGLNAVAILGGIV). Residues 76–99 (GDAAFSPAFHSLFSRYMSAELSEQ) lie on the Cytoplasmic side of the membrane. Residues 100–120 (LSFILSFSLVTGMFILFADLT) traverse the membrane as a helical segment. Residues 121 to 141 (PKRIGMIAPEAVALRIINPMR) lie on the Periplasmic side of the membrane. Residues 142–162 (FCLYVCTPLVWFFNGLANIIF) traverse the membrane as a helical segment. Residues 163–447 (RIFKLPMVRK…DAKDKEESVA (285 aa)) are Cytoplasmic-facing. 2 consecutive CBS domains span residues 216–275 (MTPR…NQSL) and 282–343 (QIRN…GLEE).

The protein belongs to the UPF0053 family. PaeA subfamily.

It is found in the cell inner membrane. Functionally, involved in cadaverine and putrescine tolerance in stationary phase. May facilitate the efflux of both cadaverine and putrescine from the cytoplasm, reducing potentially toxic levels under certain stress conditions. This chain is Polyamine export protein, found in Escherichia coli O157:H7.